The sequence spans 343 residues: UBP1-associated proteins 1A (343 aa).

The tract at residues 1 to 61 (MAKTLDKSKK…SESDNEFDPE (61 aa)) is disordered. A compositionally biased stretch (low complexity) spans 28–49 (NKQQQQPESSTPYSSSSSSSDS). Acidic residues predominate over residues 50–61 (SDSESDNEFDPE). The 78-residue stretch at 104 to 181 (RKIFVYGLPW…RTATCQLASM (78 aa)) folds into the RRM domain. The segment at 312–343 (STYPDSDAGGKRGTGKDSDAGGSSFHGYSNYS) is disordered. The segment covering 319–330 (AGGKRGTGKDSD) has biased composition (basic and acidic residues).

In terms of assembly, interacts with UBA1A, UBA2A, UBP1A, UBP1B and UBP1C.

The protein localises to the nucleus. Functionally, acts as a component of a complex regulating the turnover of mRNAs in the nucleus. Binds with high affinity to RNA molecules that contain U-rich sequences in 3'-UTRs. May function in complex with UBP1 and contribute to the stabilization of mRNAs in the nucleus. However, unlike UBP1, UBA1A does not stimulate pre-mRNA splicing. The protein is UBP1-associated proteins 1A (UBA1A) of Arabidopsis thaliana (Mouse-ear cress).